A 360-amino-acid polypeptide reads, in one-letter code: S-adenosylmethionine:tRNA ribosyltransferase-isomerase (360 aa).

It belongs to the QueA family. In terms of assembly, monomer.

The protein localises to the cytoplasm. The enzyme catalyses 7-aminomethyl-7-carbaguanosine(34) in tRNA + S-adenosyl-L-methionine = epoxyqueuosine(34) in tRNA + adenine + L-methionine + 2 H(+). It participates in tRNA modification; tRNA-queuosine biosynthesis. Transfers and isomerizes the ribose moiety from AdoMet to the 7-aminomethyl group of 7-deazaguanine (preQ1-tRNA) to give epoxyqueuosine (oQ-tRNA). The chain is S-adenosylmethionine:tRNA ribosyltransferase-isomerase from Rhodopseudomonas palustris (strain ATCC BAA-98 / CGA009).